Consider the following 384-residue polypeptide: Deoxyguanosinetriphosphate triphosphohydrolase-like protein (384 aa).

Residues 62-198 (RLTHSLEVST…AALADDISYI (137 aa)) enclose the HD domain.

Belongs to the dGTPase family. Type 2 subfamily.

The sequence is that of Deoxyguanosinetriphosphate triphosphohydrolase-like protein from Rickettsia peacockii (strain Rustic).